The chain runs to 523 residues: Acetyl-CoA hydrolase (523 aa).

Residue 277–281 participates in CoA binding; that stretch reads GIGNI. The active-site 5-glutamyl coenzyme A thioester intermediate is the glutamate 302. CoA is bound by residues asparagine 392 and glycine 396.

This sequence belongs to the acetyl-CoA hydrolase/transferase family.

It localises to the cytoplasm. The enzyme catalyses acetyl-CoA + H2O = acetate + CoA + H(+). In terms of biological role, presumably involved in regulating the intracellular acetyl-CoA pool for fatty acid and cholesterol synthesis and fatty acid oxidation. The polypeptide is Acetyl-CoA hydrolase (ACH1) (Kluyveromyces lactis (strain ATCC 8585 / CBS 2359 / DSM 70799 / NBRC 1267 / NRRL Y-1140 / WM37) (Yeast)).